The chain runs to 180 residues: MIIYLHGFDSNSPGNHEKVMQLQFIDPDVRLISYSTRHPKHDMQHLLKEVDKMLQLTADDRPLICGVGLGGYWAERIGFLCDIRQAVFNPNLFPHENMEGKIDRPEEYADIATKCVTNFREKNRDRCLVVLSRQDEALDSQRSADLLHHYYEIIWDEEQTHKFKNISPHLQRLKAFKTLG.

Belongs to the UPF0227 family.

This Klebsiella pneumoniae subsp. pneumoniae (strain ATCC 700721 / MGH 78578) protein is UPF0227 protein KPN78578_10770.